A 426-amino-acid polypeptide reads, in one-letter code: Serine protease HTRA2, mitochondrial (426 aa).

A compositionally biased stretch (low complexity) spans S31–N58. The tract at residues S31–D59 is disordered. The helical transmembrane segment at F71–G87 threads the bilayer. Positions A79 to S82 match the IAP-binding motif. The segment at S143–L306 is serine protease. Residues H161, D193, and S270 each act as charge relay system in the active site. Positions M329–V414 constitute a PDZ domain.

This sequence belongs to the peptidase S1C family. Interacts with th/DIAP1 (via BIR 2 domain).

It localises to the mitochondrion intermembrane space. The protein localises to the mitochondrion membrane. The catalysed reaction is Cleavage of non-polar aliphatic amino-acids at the P1 position, with a preference for Val, Ile and Met. At the P2 and P3 positions, Arg is selected most strongly with a secondary preference for other hydrophilic residues.. Functionally, serine protease that shows proteolytic activity against a non-specific substrate beta-casein. Promotes or induces cell death either by direct binding to and inhibition of BIRC proteins (also called inhibitor of apoptosis proteins, IAPs), leading to an increase in caspase activity, or by a BIRC inhibition-independent, caspase-independent and serine protease activity-dependent mechanism. Can antagonize antiapoptotic activity of th/Diap1 by directly inducing the degradation of th/Diap1. In Drosophila grimshawi (Hawaiian fruit fly), this protein is Serine protease HTRA2, mitochondrial.